A 138-amino-acid chain; its full sequence is MNTIHVDVVSAEESIFSGEARFVALPGEAGELGIYPRHTPLITRIKPGSVRIELPDGNEEFVFVAGGILEVQPDCVTVLSDTAIRGRDLDDQKAQEAKAAAEEALKNAKSEIDLARAQSELAVMAAQIAALRKFRQKR.

Belongs to the ATPase epsilon chain family. In terms of assembly, F-type ATPases have 2 components, CF(1) - the catalytic core - and CF(0) - the membrane proton channel. CF(1) has five subunits: alpha(3), beta(3), gamma(1), delta(1), epsilon(1). CF(0) has three main subunits: a, b and c.

Its subcellular location is the cell inner membrane. In terms of biological role, produces ATP from ADP in the presence of a proton gradient across the membrane. The sequence is that of ATP synthase epsilon chain from Acidovorax ebreus (strain TPSY) (Diaphorobacter sp. (strain TPSY)).